A 407-amino-acid chain; its full sequence is BMP-like protein unc-129 (407 aa).

Residues 1–18 (MRRLPIVLLLSVFSIANC) form the signal peptide. Asparagine 27, asparagine 42, and asparagine 211 each carry an N-linked (GlcNAc...) asparagine glycan. The interval 252-283 (DDREPIKRKNGKKNSLSEEISSEDVWQGFGEE) is disordered. The N-linked (GlcNAc...) asparagine glycan is linked to asparagine 395.

Belongs to the TGF-beta family. As to quaternary structure, interacts with netrin receptor unc-5; the interaction is direct.

The protein localises to the secreted. It localises to the extracellular space. Functionally, required for the migration of axonal growth-cones and distal tip cells (DTC) along the dorsal-ventral axis of the body wall. Acts cell nonautonomously and independently of the classical daf-4, sma-6 or daf-1 TGFbeta receptor signaling. During axon migration, facilitates long-range repulsive guidance of unc-6/netrin by enhancing unc-5-unc-40 signaling at the expense of unc-5 alone signaling, probably through direct interaction with receptor unc-5. Involved in cell-cell contact formation in sensory rays in the developing male tail, via a pathway involving plx-2 and mab-20/semaphorin-2A. In Caenorhabditis elegans, this protein is BMP-like protein unc-129.